The primary structure comprises 136 residues: ATP synthase epsilon chain (136 aa).

It belongs to the ATPase epsilon chain family. F-type ATPases have 2 components, CF(1) - the catalytic core - and CF(0) - the membrane proton channel. CF(1) has five subunits: alpha(3), beta(3), gamma(1), delta(1), epsilon(1). CF(0) has three main subunits: a, b and c.

The protein resides in the cell inner membrane. In terms of biological role, produces ATP from ADP in the presence of a proton gradient across the membrane. The polypeptide is ATP synthase epsilon chain (Persephonella marina (strain DSM 14350 / EX-H1)).